Reading from the N-terminus, the 139-residue chain is Peptide methionine sulfoxide reductase MsrB (139 aa).

One can recognise a MsrB domain in the interval 17–139; that stretch reads EEQWRRELSP…NSAALKLEPK (123 aa). Zn(2+) is bound by residues Cys-56, Cys-59, Cys-105, and Cys-108. The Nucleophile role is filled by Cys-128.

Belongs to the MsrB Met sulfoxide reductase family. Requires Zn(2+) as cofactor.

It carries out the reaction L-methionyl-[protein] + [thioredoxin]-disulfide + H2O = L-methionyl-(R)-S-oxide-[protein] + [thioredoxin]-dithiol. The sequence is that of Peptide methionine sulfoxide reductase MsrB from Bradyrhizobium diazoefficiens (strain JCM 10833 / BCRC 13528 / IAM 13628 / NBRC 14792 / USDA 110).